The chain runs to 312 residues: Olfactory receptor 1J21 (312 aa).

Transmembrane regions (helical) follow at residues 29 to 49 (ALFL…ILLI), 58 to 78 (PMYF…SVTA), 95 to 115 (AGCV…NFLL), 143 to 163 (LLVM…TLLF), 197 to 217 (LVIL…ILVS), 241 to 261 (CGSH…LYFF), and 272 to 292 (VIVA…IYSL).

It belongs to the G-protein coupled receptor 1 family.

It is found in the cell membrane. Its function is as follows. Odorant receptor. Activated by (+) and (-)-carvone. This chain is Olfactory receptor 1J21, found in Mus musculus (Mouse).